Here is a 239-residue protein sequence, read N- to C-terminus: Probable septum site-determining protein MinC (239 aa).

The protein belongs to the MinC family. In terms of assembly, interacts with MinD and FtsZ.

Cell division inhibitor that blocks the formation of polar Z ring septums. Rapidly oscillates between the poles of the cell to destabilize FtsZ filaments that have formed before they mature into polar Z rings. Prevents FtsZ polymerization. This chain is Probable septum site-determining protein MinC, found in Colwellia psychrerythraea (strain 34H / ATCC BAA-681) (Vibrio psychroerythus).